The chain runs to 177 residues: Large ribosomal subunit protein uL6 (177 aa).

This sequence belongs to the universal ribosomal protein uL6 family. As to quaternary structure, part of the 50S ribosomal subunit.

This protein binds to the 23S rRNA, and is important in its secondary structure. It is located near the subunit interface in the base of the L7/L12 stalk, and near the tRNA binding site of the peptidyltransferase center. The chain is Large ribosomal subunit protein uL6 from Colwellia psychrerythraea (strain 34H / ATCC BAA-681) (Vibrio psychroerythus).